We begin with the raw amino-acid sequence, 262 residues long: MKIALGIEYDGSRYFGWQRQDEVESVQQKLEEALSIVANAPIEVFCAGRTDSGVHGTGQVVHFETQAIRPLQSWCFGTNANLPDDIAVKWAVEVSEDFHARFSATARRYRYIIFNNKLRSAILPKGVSHYHYALDHQKMHVAGQFLLGENDFSSFRAAKCQSHTPWRNVHHLNVSRLGNYIVVDIQANAFVHHMVRNIVESLIEVGQGRQPVEWIQWLLAQRDRTLAAPTAKAEGLYLVDVHYPERFGIPKTALGPLFLADN.

D51 (nucleophile) is an active-site residue. Y109 contacts substrate.

Belongs to the tRNA pseudouridine synthase TruA family. In terms of assembly, homodimer.

The enzyme catalyses uridine(38/39/40) in tRNA = pseudouridine(38/39/40) in tRNA. Its function is as follows. Formation of pseudouridine at positions 38, 39 and 40 in the anticodon stem and loop of transfer RNAs. The sequence is that of tRNA pseudouridine synthase A from Actinobacillus pleuropneumoniae serotype 5b (strain L20).